Here is a 283-residue protein sequence, read N- to C-terminus: uncharacterized protein (283 aa).

The segment covering Ser208–Lys232 has biased composition (basic and acidic residues). The tract at residues Ser208–Lys237 is disordered.

This is an uncharacterized protein from Saccharomyces cerevisiae (strain ATCC 204508 / S288c) (Baker's yeast).